The primary structure comprises 530 residues: Formate--tetrahydrofolate ligase (530 aa).

46–53 (TPEGEGKT) lines the ATP pocket.

The protein belongs to the formate--tetrahydrofolate ligase family.

The catalysed reaction is (6S)-5,6,7,8-tetrahydrofolate + formate + ATP = (6R)-10-formyltetrahydrofolate + ADP + phosphate. The protein operates within one-carbon metabolism; tetrahydrofolate interconversion. This chain is Formate--tetrahydrofolate ligase, found in Malacoplasma penetrans (strain HF-2) (Mycoplasma penetrans).